Reading from the N-terminus, the 603-residue chain is Sorting nexin-41 (603 aa).

Residues 1 to 36 form a disordered region; the sequence is MNSFRESDEEDNNPFSGTNHLYASGIGAVPEGDDDF. Residues 121–241 enclose the PX domain; that stretch reads AEGSLGALRI…QKFLNPEYIW (121 aa). 4 residues coordinate a 1,2-diacyl-sn-glycero-3-phospho-(1D-myo-inositol-3-phosphate): R159, S161, K185, and R208.

Belongs to the sorting nexin family.

The protein localises to the endosome membrane. It is found in the endomembrane system. Functionally, may be required for cytoplasm to vacuole transport (Cvt) and pexophagy. This chain is Sorting nexin-41 (SNX41), found in Eremothecium gossypii (strain ATCC 10895 / CBS 109.51 / FGSC 9923 / NRRL Y-1056) (Yeast).